The chain runs to 31 residues: Cytochrome b6-f complex subunit 6 (31 aa).

The helical transmembrane segment at 4-26 threads the bilayer; sequence LTSYFGFLLAALTITSALFIGLS.

The protein belongs to the PetL family. In terms of assembly, the 4 large subunits of the cytochrome b6-f complex are cytochrome b6, subunit IV (17 kDa polypeptide, PetD), cytochrome f and the Rieske protein, while the 4 small subunits are PetG, PetL, PetM and PetN. The complex functions as a dimer.

The protein resides in the plastid. The protein localises to the chloroplast thylakoid membrane. In terms of biological role, component of the cytochrome b6-f complex, which mediates electron transfer between photosystem II (PSII) and photosystem I (PSI), cyclic electron flow around PSI, and state transitions. PetL is important for photoautotrophic growth as well as for electron transfer efficiency and stability of the cytochrome b6-f complex. This Aethionema cordifolium (Lebanon stonecress) protein is Cytochrome b6-f complex subunit 6.